Reading from the N-terminus, the 289-residue chain is 4-diphosphocytidyl-2-C-methyl-D-erythritol kinase (289 aa).

Residue K15 is part of the active site. Residue 100–110 coordinates ATP; the sequence is PVSAGLAGGSA. D140 is an active-site residue.

Belongs to the GHMP kinase family. IspE subfamily.

The catalysed reaction is 4-CDP-2-C-methyl-D-erythritol + ATP = 4-CDP-2-C-methyl-D-erythritol 2-phosphate + ADP + H(+). The protein operates within isoprenoid biosynthesis; isopentenyl diphosphate biosynthesis via DXP pathway; isopentenyl diphosphate from 1-deoxy-D-xylulose 5-phosphate: step 3/6. Catalyzes the phosphorylation of the position 2 hydroxy group of 4-diphosphocytidyl-2C-methyl-D-erythritol. In Anaplasma marginale (strain Florida), this protein is 4-diphosphocytidyl-2-C-methyl-D-erythritol kinase.